The primary structure comprises 146 residues: D-aminoacyl-tRNA deacylase (146 aa).

A Gly-cisPro motif, important for rejection of L-amino acids motif is present at residues glycine 137 to proline 138.

The protein belongs to the DTD family. Homodimer.

The protein localises to the cytoplasm. It catalyses the reaction glycyl-tRNA(Ala) + H2O = tRNA(Ala) + glycine + H(+). It carries out the reaction a D-aminoacyl-tRNA + H2O = a tRNA + a D-alpha-amino acid + H(+). Functionally, an aminoacyl-tRNA editing enzyme that deacylates mischarged D-aminoacyl-tRNAs. Also deacylates mischarged glycyl-tRNA(Ala), protecting cells against glycine mischarging by AlaRS. Acts via tRNA-based rather than protein-based catalysis; rejects L-amino acids rather than detecting D-amino acids in the active site. By recycling D-aminoacyl-tRNA to D-amino acids and free tRNA molecules, this enzyme counteracts the toxicity associated with the formation of D-aminoacyl-tRNA entities in vivo and helps enforce protein L-homochirality. The polypeptide is D-aminoacyl-tRNA deacylase (Variovorax paradoxus (strain S110)).